The chain runs to 203 residues: MKILVTAFDPFGGENINPSYEVLKNLKDNIEGAEIIKIQVPTVFYLSVEKVIEKIKEVKPDAVLSIGQAGGRYDITVERIAINIDDARIPDNIGQQPIDTPIDPEGAPAYFATIPIKEIVEEIKKENIPASISNTAGTFVCNHLMYGILNYVHKNGLNIKAGFIHIPYLPVQVLNKPYTPSMSLGDMVKAIETAIKVIAKKSR.

Residues Glu-78, Cys-141, and His-165 contribute to the active site.

The protein belongs to the peptidase C15 family. Homotetramer.

The protein resides in the cytoplasm. It catalyses the reaction Release of an N-terminal pyroglutamyl group from a polypeptide, the second amino acid generally not being Pro.. Its function is as follows. Removes 5-oxoproline from various penultimate amino acid residues except L-proline. The protein is Pyrrolidone-carboxylate peptidase of Thermoanaerobacter pseudethanolicus (strain ATCC 33223 / 39E) (Clostridium thermohydrosulfuricum).